Here is a 437-residue protein sequence, read N- to C-terminus: Type II methylase M.HgiEI (437 aa).

The SAM-dependent MTase C5-type domain maps to 4-431 (FRFIDLFAGI…KRLQCVKLFE (428 aa)). C75 is a catalytic residue.

The protein belongs to the class I-like SAM-binding methyltransferase superfamily. C5-methyltransferase family.

It catalyses the reaction a 2'-deoxycytidine in DNA + S-adenosyl-L-methionine = a 5-methyl-2'-deoxycytidine in DNA + S-adenosyl-L-homocysteine + H(+). A methylase that recognizes the double-stranded sequence 5'-GGWCC-3', methylates C-? on both strands, and protects the DNA from cleavage by the HgiEI endonuclease. This system is more active than isoschizomeric RM.HgiBI. This is Type II methylase M.HgiEI from Herpetosiphon aurantiacus (Herpetosiphon giganteus).